We begin with the raw amino-acid sequence, 195 residues long: UPF0314 protein RHE_CH03951 (195 aa).

4 consecutive transmembrane segments (helical) span residues 14-34 (AFWF…EYLM), 64-84 (WYTP…YLIL), 128-148 (DSIL…FFAA), and 150-170 (APVA…GYVI).

This sequence belongs to the UPF0314 family.

It is found in the cell membrane. The polypeptide is UPF0314 protein RHE_CH03951 (Rhizobium etli (strain ATCC 51251 / DSM 11541 / JCM 21823 / NBRC 15573 / CFN 42)).